The primary structure comprises 96 residues: Cytochrome b (96 aa).

A run of 3 helical transmembrane segments spans residues 1-15, 39-60, and 75-95; these read LCXIXQILTGLFLAM, WLIRNMHANGSSFFFICIYLHI, and WNVGVILLLLVMMTAFVGYVL. Residues His-45 and His-59 each coordinate heme b.

This sequence belongs to the cytochrome b family. As to quaternary structure, the cytochrome bc1 complex contains 3 respiratory subunits (MT-CYB, CYC1 and UQCRFS1), 2 core proteins (UQCRC1 and UQCRC2) and probably 6 low-molecular weight proteins. It depends on heme b as a cofactor.

It localises to the mitochondrion inner membrane. Functionally, component of the ubiquinol-cytochrome c reductase complex (complex III or cytochrome b-c1 complex) that is part of the mitochondrial respiratory chain. The b-c1 complex mediates electron transfer from ubiquinol to cytochrome c. Contributes to the generation of a proton gradient across the mitochondrial membrane that is then used for ATP synthesis. In Geophagus steindachneri (Red hump earth eater), this protein is Cytochrome b (mt-cyb).